The sequence spans 141 residues: Short-chain diamines transporter (141 aa).

4 consecutive transmembrane segments (helical) span residues 16–36, 39–59, 76–96, and 103–123; these read VILLVIIAIALSFIFDVPLEV, TLGIVMAVTSVFWNMIFNHFF, ILHAIGFEGGLMLVTIPMVAY, and WQAIVLDFGLTMCILVYTFIF.

It belongs to the proteobacterial antimicrobial compound efflux (PACE) (TC 2.A.117) family.

The protein localises to the cell inner membrane. Functionally, mediates the efflux of short-chain diamines when energized by an electrochemical gradient. Involved in resistance to the synthetic biocide chlorhexidine, a widely used antiseptic and disinfectant in both hospital and community settings. Interacts directly with chlorhexidine and mediates its efflux via an energy-dependent mechanism. The chain is Short-chain diamines transporter from Acinetobacter baylyi (strain ATCC 33305 / BD413 / ADP1).